The primary structure comprises 344 residues: Heat-inducible transcription repressor HrcA (344 aa).

The protein belongs to the HrcA family.

Negative regulator of class I heat shock genes (grpE-dnaK-dnaJ and groELS operons). Prevents heat-shock induction of these operons. This Streptococcus pneumoniae (strain 70585) protein is Heat-inducible transcription repressor HrcA.